Reading from the N-terminus, the 104-residue chain is Pole-localizer protein TmaR (104 aa).

Coiled-coil stretches lie at residues 7–34 (IVNQ…NRKR) and 76–96 (SAEI…LTEE).

Belongs to the pole-localizer TmaR family.

The protein resides in the cytoplasm. Its function is as follows. Pole-localizer protein involved in the regulation of several cellular processes. The protein is Pole-localizer protein TmaR of Vibrio campbellii (strain ATCC BAA-1116).